Here is a 288-residue protein sequence, read N- to C-terminus: Protoheme IX farnesyltransferase 2 (288 aa).

A run of 9 helical transmembrane segments spans residues 8-28 (ITKPGIIFGNLISVAAGFFLA), 36-56 (LMLFLTTLAGVGLVIASGCVV), 85-105 (VAFVYALAMLLLGTALLFQLV), 108-128 (LSAVVVLLGYVYYVFFYTMWY), 131-151 (NSVYGTLVGSISGAVPPLVGY), 152-172 (LAVTNFISLEAILLFTMFCLW), 211-231 (AYVVAFGAVSLGLFLLGEAGY), 233-252 (YLAVAAVVCLMWTKVTFRSI), and 267-287 (VSLLVVMGISGVLGVELIPLA).

It belongs to the UbiA prenyltransferase family. Protoheme IX farnesyltransferase subfamily.

Its subcellular location is the cell inner membrane. It carries out the reaction heme b + (2E,6E)-farnesyl diphosphate + H2O = Fe(II)-heme o + diphosphate. It participates in porphyrin-containing compound metabolism; heme O biosynthesis; heme O from protoheme: step 1/1. Functionally, converts heme B (protoheme IX) to heme O by substitution of the vinyl group on carbon 2 of heme B porphyrin ring with a hydroxyethyl farnesyl side group. The chain is Protoheme IX farnesyltransferase 2 from Vibrio parahaemolyticus serotype O3:K6 (strain RIMD 2210633).